We begin with the raw amino-acid sequence, 112 residues long: Colipase (112 aa).

An N-terminal signal peptide occupies residues 1–17 (MKVLVVLLVTLVAVAYA). The propeptide at 18–22 (APGPR) is enterostatin, activation peptide. 5 disulfides stabilise this stretch: Cys34-Cys45, Cys40-Cys56, Cys44-Cys78, Cys66-Cys86, and Cys80-Cys104.

This sequence belongs to the colipase family. In terms of assembly, forms a 1:1 stoichiometric complex with pancreatic lipase. In terms of tissue distribution, expressed by the pancreas.

It is found in the secreted. Colipase is a cofactor of pancreatic lipase. It allows the lipase to anchor itself to the lipid-water interface. Without colipase the enzyme is washed off by bile salts, which have an inhibitory effect on the lipase. In terms of biological role, enterostatin has a biological activity as a satiety signal. This Rattus norvegicus (Rat) protein is Colipase.